The sequence spans 601 residues: Beta-phellandrene synthase (601 aa).

A chloroplast-targeting transit peptide spans 1–35 (MSTISIHHVGILRNPLPSKNKRALINNPWSLSLPR). Residues aspartate 356 and aspartate 360 each contribute to the Mn(2+) site. Positions 356-360 (DDVYD) match the DDXXD motif motif. Homodimerization stretches follow at residues 362–368 (YGTLDEL) and 434–471 (EAEW…LSIP). Aspartate 499 and glutamate 507 together coordinate Mn(2+).

Belongs to the terpene synthase family. In terms of assembly, homodimer. The cofactor is Mn(2+). Mg(2+) serves as cofactor. As to expression, expressed in peltate glandular trichomes. Present at low levels in flowers and stems.

The protein resides in the plastid. It localises to the chloroplast. It catalyses the reaction (2E)-geranyl diphosphate = beta-phellandrene + diphosphate. The catalysed reaction is (2E)-geranyl diphosphate = (1R,5R)-sabinene + diphosphate. It functions in the pathway secondary metabolite biosynthesis; terpenoid biosynthesis. Involved in the biosynthesis of phenolic monoterpenes natural products. Monoterpene synthase that catalyzes mainly the formation of olefins such as sabinene and beta-phellandrene, and minor amounts of other monoterpenes (e.g. myrcene, gamma-terpinene, alpha-thujene and alpha-pinene) from geranyl diphosphate (GPP). This is Beta-phellandrene synthase from Origanum vulgare (Wild marjoram).